We begin with the raw amino-acid sequence, 688 residues long: NADH-ubiquinone oxidoreductase 75 kDa subunit (688 aa).

In terms of domain architecture, 2Fe-2S ferredoxin-type spans 1-85; the sequence is MLIRFKINEI…DESIETEIDE (85 aa). The [2Fe-2S] cluster site is built by Cys-38, Cys-49, Cys-52, and Cys-66. The 40-residue stretch at 85–124 folds into the 4Fe-4S His(Cys)3-ligated-type domain; the sequence is EILKAREGVMEFLLINHPLDCPICDQGGECDLQEQTIAYG. The [4Fe-4S] cluster site is built by His-101, Cys-105, Cys-108, Cys-114, Cys-153, Cys-156, Cys-159, and Cys-204. A 4Fe-4S Mo/W bis-MGD-type domain is found at 223–279; sequence LKNIKGIDIFDTVLTPINYQVKGGEIFRILPRINDRLNEEWITDKVRFHYESYKIIE.

It belongs to the complex I 75 kDa subunit family. Complex I is composed of about 45 different subunits. The cofactor is [2Fe-2S] cluster. [4Fe-4S] cluster is required as a cofactor.

The protein localises to the mitochondrion inner membrane. It catalyses the reaction a ubiquinone + NADH + 5 H(+)(in) = a ubiquinol + NAD(+) + 4 H(+)(out). In terms of biological role, core subunit of the mitochondrial membrane respiratory chain NADH dehydrogenase (Complex I) that is believed to belong to the minimal assembly required for catalysis. Complex I functions in the transfer of electrons from NADH to the respiratory chain. The immediate electron acceptor for the enzyme is believed to be ubiquinone. This is the largest subunit of complex I and it is a component of the iron-sulfur (IP) fragment of the enzyme. It may form part of the active site crevice where NADH is oxidized. The sequence is that of NADH-ubiquinone oxidoreductase 75 kDa subunit (nad11) from Dictyostelium citrinum (Slime mold).